Here is a 434-residue protein sequence, read N- to C-terminus: Glycerol-3-phosphate acyltransferase 3 (434 aa).

The helical transmembrane segment at 14 to 34 (WLTLVLGFILLPSVFGVSLGI) threads the bilayer. 2 positions are modified to phosphoserine: Ser-68 and Ser-77. The next 2 helical transmembrane spans lie at 137–157 (ISLRLTMVWVLGVIVRYCVLL) and 161–181 (VTLAFIGISLLVIGTTLVGQL). Residues 229 to 234 (HTSPID) carry the HXXXXD motif motif.

Belongs to the 1-acyl-sn-glycerol-3-phosphate acyltransferase family. Widely expressed. Expressed in liver, kidney, testis, brain, heart, skeletal muscle, thyroid, prostate, thymus and placenta. Also expressed lung and adipose tissue.

The protein resides in the endoplasmic reticulum membrane. It carries out the reaction sn-glycerol 3-phosphate + an acyl-CoA = a 1-acyl-sn-glycero-3-phosphate + CoA. The enzyme catalyses a 1-acyl-sn-glycero-3-phosphate + an acyl-CoA = a 1,2-diacyl-sn-glycero-3-phosphate + CoA. The catalysed reaction is dodecanoyl-CoA + sn-glycerol 3-phosphate = 1-dodecanoyl-sn-glycerol 3-phosphate + CoA. It catalyses the reaction sn-glycerol 3-phosphate + hexadecanoyl-CoA = 1-hexadecanoyl-sn-glycero-3-phosphate + CoA. It carries out the reaction sn-glycerol 3-phosphate + (9Z)-octadecenoyl-CoA = 1-(9Z-octadecenoyl)-sn-glycero-3-phosphate + CoA. The enzyme catalyses (9Z,12Z)-octadecadienoyl-CoA + sn-glycerol 3-phosphate = 1-(9Z,12Z)-octadecadienoyl-sn-glycero-3-phosphate + CoA. The catalysed reaction is 1-tetradecanoyl-sn-glycerol 3-phosphate + (9Z)-octadecenoyl-CoA = 1-tetradecanoyl-2-(9Z)-octadecenoyl-sn-glycero-3-phosphate + CoA. It catalyses the reaction 1-hexadecanoyl-sn-glycero-3-phosphate + (9Z)-octadecenoyl-CoA = 1-hexadecanoyl-2-(9Z-octadecenoyl)-sn-glycero-3-phosphate + CoA. It carries out the reaction 1-(9Z-octadecenoyl)-sn-glycero-3-phosphate + (9Z)-octadecenoyl-CoA = 1,2-di-(9Z-octadecenoyl)-sn-glycero-3-phosphate + CoA. The enzyme catalyses 1-(6Z,9Z,12Z-octadecatrienoyl)-sn-glycero-3-phosphate + (9Z)-octadecenoyl-CoA = (6Z,9Z,12Z)-octadecatrienoyl-2-(9Z)-octadecenoyl-sn-glycero-3-phosphate + CoA. The catalysed reaction is 1-(9Z,12Z,15Z)-octadecatrienoyl-sn-glycero-3-phosphate + (9Z)-octadecenoyl-CoA = 1-(9Z,12Z,15Z)-octadecatrienoyl-2-(9Z)-octadecenoyl-sn-glycero-3-phosphate + CoA. It catalyses the reaction 1-(9Z-octadecenoyl)-sn-glycero-3-phosphate + tetradecanoyl-CoA = 1-(9Z)-octadecenoyl-2-tetradecanoyl-sn-glycero-3-phosphate + CoA. It carries out the reaction 1-(9Z-octadecenoyl)-sn-glycero-3-phosphate + hexadecanoyl-CoA = 1-(9Z)-octadecenoyl-2-hexadecanoyl-sn-glycero-3-phosphate + CoA. The enzyme catalyses 1-(9Z-octadecenoyl)-sn-glycero-3-phosphate + octadecanoyl-CoA = 1-(9Z-octadecenoyl)-2-octadecanoyl-sn-glycero-3-phosphate + CoA. The catalysed reaction is 1-(9Z-octadecenoyl)-sn-glycero-3-phosphate + (9Z,12Z)-octadecadienoyl-CoA = 1-(9Z)-octadecenoyl-2-(9Z,12Z)-octadecadienoyl-sn-glycero-3-phosphate + CoA. It catalyses the reaction 1-(5Z,8Z,11Z,14Z-eicosatetraenoyl)-sn-glycero-3-phosphate + (9Z)-octadecenoyl-CoA = 1-(5Z,8Z,11Z,14Z)-eicosatetraenoyl-2-(9Z)-octadecenoyl-sn-glycero-3-phosphate + CoA. Its pathway is glycerolipid metabolism; triacylglycerol biosynthesis. It participates in phospholipid metabolism; CDP-diacylglycerol biosynthesis; CDP-diacylglycerol from sn-glycerol 3-phosphate: step 1/3. Inhibited by N-ethylmaleimide (NEM). Its function is as follows. Converts glycerol-3-phosphate to 1-acyl-sn-glycerol-3-phosphate (lysophosphatidic acid or LPA) by incorporating an acyl moiety at the sn-1 position of the glycerol backbone. Also converts LPA into 1,2-diacyl-sn-glycerol-3-phosphate (phosphatidic acid or PA) by incorporating an acyl moiety at the sn-2 position of the glycerol backbone. Protects cells against lipotoxicity. This chain is Glycerol-3-phosphate acyltransferase 3, found in Homo sapiens (Human).